The chain runs to 313 residues: ADP-L-glycero-D-manno-heptose-6-epimerase (313 aa).

NADP(+)-binding positions include 10 to 11, 31 to 32, K38, R53, 75 to 79, and N92; these read MI, DN, and EGACS. Y139 (proton acceptor) is an active-site residue. Residue K143 coordinates NADP(+). N174 lines the substrate pocket. NADP(+) contacts are provided by V175 and K183. K183 acts as the Proton acceptor in catalysis. Substrate contacts are provided by residues S185, H192, 206–209, R214, and Y277; that span reads FAGS.

Belongs to the NAD(P)-dependent epimerase/dehydratase family. HldD subfamily. Homopentamer. The cofactor is NADP(+).

The catalysed reaction is ADP-D-glycero-beta-D-manno-heptose = ADP-L-glycero-beta-D-manno-heptose. It participates in nucleotide-sugar biosynthesis; ADP-L-glycero-beta-D-manno-heptose biosynthesis; ADP-L-glycero-beta-D-manno-heptose from D-glycero-beta-D-manno-heptose 7-phosphate: step 4/4. Its pathway is bacterial outer membrane biogenesis; LPS core biosynthesis. Functionally, catalyzes the interconversion between ADP-D-glycero-beta-D-manno-heptose and ADP-L-glycero-beta-D-manno-heptose via an epimerization at carbon 6 of the heptose. The protein is ADP-L-glycero-D-manno-heptose-6-epimerase of Vibrio vulnificus (strain CMCP6).